The primary structure comprises 373 residues: MSVKTKTITILPGDHVGTEIVNEAIKVLEAIEAATPYQKIHFDFKHHLIGGAAIDATGVPLPDDALESAKNSDAVLLGAVGGPKWGTGALRPEQGLLKIRKELNLYANIRPCNFASDSLLELSPLRPEVVKGTNLIIVRELVGGIYFGDREEQEESADKQTAWDTEKYTVDEVTRITRMAAFMALQHTPPLPIWSLDKANVLASSRLWRRTVDKVISEEFPTLSVQHQLIDSAAMILIQNPTKLNGIIITSNMFGDIISDEASVIPGSLGLLPSASLASLPDTNTAFGLYEPCHGSAPDLPANKVNPIATILSAASMLRLSLDCVKEAEALEEAVKQVLDKGIRTADLRGTSSTTEVGDAIVEAVTKILKEKA.

Residue 82-93 (GPKWGTGALRPE) coordinates NAD(+). Substrate is bound by residues R100, R110, R139, and D231. Residues D231, D256, and D260 each coordinate Mg(2+). Residue 295-306 (GSAPDLPANKVN) participates in NAD(+) binding.

It belongs to the isocitrate and isopropylmalate dehydrogenases family. As to quaternary structure, homodimer. Requires Mg(2+) as cofactor. Mn(2+) is required as a cofactor.

Its subcellular location is the cytoplasm. The catalysed reaction is (2R,3S)-3-isopropylmalate + NAD(+) = 4-methyl-2-oxopentanoate + CO2 + NADH. Its pathway is amino-acid biosynthesis; L-leucine biosynthesis; L-leucine from 3-methyl-2-oxobutanoate: step 3/4. Its function is as follows. Catalyzes the oxidation of 3-carboxy-2-hydroxy-4-methylpentanoate (3-isopropylmalate) to 3-carboxy-4-methyl-2-oxopentanoate. The product decarboxylates to 4-methyl-2 oxopentanoate. This Candida maltosa (Yeast) protein is 3-isopropylmalate dehydrogenase (LEU2).